The sequence spans 439 residues: Trigger factor (439 aa).

Residues 165 to 250 (GDFAKFDFEG…LHEIQELKLP (86 aa)) enclose the PPIase FKBP-type domain.

Belongs to the FKBP-type PPIase family. Tig subfamily.

The protein resides in the cytoplasm. It catalyses the reaction [protein]-peptidylproline (omega=180) = [protein]-peptidylproline (omega=0). In terms of biological role, involved in protein export. Acts as a chaperone by maintaining the newly synthesized protein in an open conformation. Functions as a peptidyl-prolyl cis-trans isomerase. This chain is Trigger factor, found in Campylobacter lari (strain RM2100 / D67 / ATCC BAA-1060).